Reading from the N-terminus, the 287-residue chain is 4-hydroxybenzoate octaprenyltransferase (287 aa).

Helical transmembrane passes span 21–41, 44–64, 91–111, 112–132, 139–159, 160–180, 211–231, 235–255, and 263–283; these read VGIF…AKGA, FKIA…GCIV, VTEA…LVLL, LNRL…VYPF, LPQL…FAAT, VGHV…WPIV, LMIG…GWYL, YWFY…QFLI, and CFAA…GILL.

Belongs to the UbiA prenyltransferase family. Requires Mg(2+) as cofactor.

The protein localises to the cell inner membrane. It carries out the reaction all-trans-octaprenyl diphosphate + 4-hydroxybenzoate = 4-hydroxy-3-(all-trans-octaprenyl)benzoate + diphosphate. Its pathway is cofactor biosynthesis; ubiquinone biosynthesis. Functionally, catalyzes the prenylation of para-hydroxybenzoate (PHB) with an all-trans polyprenyl group. Mediates the second step in the final reaction sequence of ubiquinone-8 (UQ-8) biosynthesis, which is the condensation of the polyisoprenoid side chain with PHB, generating the first membrane-bound Q intermediate 3-octaprenyl-4-hydroxybenzoate. The polypeptide is 4-hydroxybenzoate octaprenyltransferase (Coxiella burnetii (strain CbuG_Q212) (Coxiella burnetii (strain Q212))).